The following is a 55-amino-acid chain: Large ribosomal subunit protein bL33 (55 aa).

The protein belongs to the bacterial ribosomal protein bL33 family.

The chain is Large ribosomal subunit protein bL33 from Brucella abortus (strain S19).